The chain runs to 696 residues: Polyribonucleotide nucleotidyltransferase (696 aa).

Residues Asp489 and Asp495 each contribute to the Mg(2+) site. One can recognise a KH domain in the interval 556 to 615 (PQYVTMKINPEKIRDVIGKGGVVIREITEATNCAIDISDDGTIKIAAHTTEEGEAAKRRI). Positions 625–693 (GKVYEGTVVK…RQGRVRLSMK (69 aa)) constitute an S1 motif domain.

It belongs to the polyribonucleotide nucleotidyltransferase family. Component of the RNA degradosome, which is a multiprotein complex involved in RNA processing and mRNA degradation. Requires Mg(2+) as cofactor.

It is found in the cytoplasm. The enzyme catalyses RNA(n+1) + phosphate = RNA(n) + a ribonucleoside 5'-diphosphate. Involved in mRNA degradation. Catalyzes the phosphorolysis of single-stranded polyribonucleotides processively in the 3'- to 5'-direction. This Coxiella burnetii (strain CbuK_Q154) (Coxiella burnetii (strain Q154)) protein is Polyribonucleotide nucleotidyltransferase.